Here is a 165-residue protein sequence, read N- to C-terminus: Phosphopantetheine adenylyltransferase (165 aa).

Ser-10 is a substrate binding site. ATP contacts are provided by residues 10–11 (SF) and His-18. Substrate contacts are provided by Lys-42, Thr-79, and Arg-93. Residues 94–96 (GLR), Glu-104, and 129–135 (VRPITAT) each bind ATP.

This sequence belongs to the bacterial CoaD family. Homohexamer. The cofactor is Mg(2+).

The protein resides in the cytoplasm. It catalyses the reaction (R)-4'-phosphopantetheine + ATP + H(+) = 3'-dephospho-CoA + diphosphate. It participates in cofactor biosynthesis; coenzyme A biosynthesis; CoA from (R)-pantothenate: step 4/5. Functionally, reversibly transfers an adenylyl group from ATP to 4'-phosphopantetheine, yielding dephospho-CoA (dPCoA) and pyrophosphate. This Rhodopseudomonas palustris (strain BisA53) protein is Phosphopantetheine adenylyltransferase.